Consider the following 623-residue polypeptide: Leucine-rich repeat, immunoglobulin-like domain and transmembrane domain-containing protein 1 (623 aa).

An N-terminal signal peptide occupies residues 1 to 21; the sequence is MRVALGMLWLLALAWPPQARG. An LRRNT domain is found at 22–59; the sequence is FCPSQCSCSLHIMGDGSKARTVVCNDPDMTLPPASIPP. The Lumenal portion of the chain corresponds to 22–526; it reads FCPSQCSCSL…EVVDAENTQQ (505 aa). LRR repeat units lie at residues 60 to 81, 84 to 105, 108 to 129, 132 to 153, and 156 to 177; these read DTSR…AFRP, RLEQ…MLRG, RLRE…ALRD, KLRL…AARF, and NLTF…LIVS. Asn-156 is a glycosylation site (N-linked (GlcNAc...) asparagine). Positions 201 to 253 constitute an LRRCT domain; it reads NPWACDCRLYDLVHLLDGWAPNLAFIETELRCASPRSLAGVAFSQLELRKCQG. The Ig-like C2-type domain maps to 266 to 335; sequence LLGGTALLRC…YICQAKNFLG (70 aa). Cysteines 275 and 328 form a disulfide. Residues Asn-296 and Asn-455 are each glycosylated (N-linked (GlcNAc...) asparagine). The 89-residue stretch at 430 to 518 folds into the Fibronectin type-III domain; sequence MVRSVKVVGD…QCVIFSTNEV (89 aa). Residues 527 to 547 traverse the membrane as a helical segment; that stretch reads LINVVVISVAIVIALPLTLLV. The Cytoplasmic segment spans residues 548–623; that stretch reads CCSALQKRCR…GGRRINEYFC (76 aa). Residues 571-594 form an LRR 6 repeat; sequence YVNLERLGYSEDGLEELSRHSVSE.

In terms of assembly, may form a homodimer. Interacts with LRIT2; may form a heterodimer with LRIT2. Interacts (via its N-terminal extracellular domain) with metabotropic glutamate receptor GRM6. Interacts (via its extreme C-terminus) with the scaffold protein FRMPD2 (via the third PDZ domain); the interaction leads to their colocalization in photoreceptor synapses.

It localises to the endoplasmic reticulum membrane. Its subcellular location is the cell projection. The protein resides in the dendrite. Photoreceptor synaptic protein essential for normal vision. Involved in synapse formation in cone photoreceptor cells. The chain is Leucine-rich repeat, immunoglobulin-like domain and transmembrane domain-containing protein 1 (LRIT1) from Homo sapiens (Human).